The primary structure comprises 78 residues: Acyl carrier protein (78 aa).

The Carrier domain maps to 1-76 (MALFEDIQAV…DVVKYIEDNK (76 aa)). Serine 36 bears the O-(pantetheine 4'-phosphoryl)serine mark.

Belongs to the acyl carrier protein (ACP) family. 4'-phosphopantetheine is transferred from CoA to a specific serine of apo-ACP by AcpS. This modification is essential for activity because fatty acids are bound in thioester linkage to the sulfhydryl of the prosthetic group.

It localises to the cytoplasm. It participates in lipid metabolism; fatty acid biosynthesis. Functionally, carrier of the growing fatty acid chain in fatty acid biosynthesis. This Helicobacter pylori (strain Shi470) protein is Acyl carrier protein.